Reading from the N-terminus, the 156-residue chain is Transcription antitermination protein NusB (156 aa).

This sequence belongs to the NusB family.

Involved in transcription antitermination. Required for transcription of ribosomal RNA (rRNA) genes. Binds specifically to the boxA antiterminator sequence of the ribosomal RNA (rrn) operons. The polypeptide is Transcription antitermination protein NusB (Rickettsia rickettsii (strain Iowa)).